A 317-amino-acid polypeptide reads, in one-letter code: Ribosomal RNA small subunit methyltransferase H (317 aa).

Residues 36 to 38 (GGH), Asp-56, Phe-80, Asp-102, and Gln-109 each bind S-adenosyl-L-methionine.

Belongs to the methyltransferase superfamily. RsmH family.

The protein resides in the cytoplasm. It catalyses the reaction cytidine(1402) in 16S rRNA + S-adenosyl-L-methionine = N(4)-methylcytidine(1402) in 16S rRNA + S-adenosyl-L-homocysteine + H(+). Its function is as follows. Specifically methylates the N4 position of cytidine in position 1402 (C1402) of 16S rRNA. This Baumannia cicadellinicola subsp. Homalodisca coagulata protein is Ribosomal RNA small subunit methyltransferase H.